Reading from the N-terminus, the 362-residue chain is Mannose-1-phosphate guanyltransferase (362 aa).

Belongs to the transferase hexapeptide repeat family.

It localises to the cytoplasm. It carries out the reaction alpha-D-mannose 1-phosphate + GTP + H(+) = GDP-alpha-D-mannose + diphosphate. It functions in the pathway nucleotide-sugar biosynthesis; GDP-alpha-D-mannose biosynthesis; GDP-alpha-D-mannose from alpha-D-mannose 1-phosphate (GTP route): step 1/1. Functionally, involved in cell wall synthesis where it is required for glycosylation. Involved in cell cycle progression through cell-size checkpoint. In Debaryomyces hansenii (strain ATCC 36239 / CBS 767 / BCRC 21394 / JCM 1990 / NBRC 0083 / IGC 2968) (Yeast), this protein is Mannose-1-phosphate guanyltransferase (MPG1).